We begin with the raw amino-acid sequence, 204 residues long: Elongation factor Ts (204 aa).

Residues 87-90 (TDFV) are involved in Mg(2+) ion dislocation from EF-Tu.

It belongs to the EF-Ts family.

It localises to the cytoplasm. Its function is as follows. Associates with the EF-Tu.GDP complex and induces the exchange of GDP to GTP. It remains bound to the aminoacyl-tRNA.EF-Tu.GTP complex up to the GTP hydrolysis stage on the ribosome. In Frankia alni (strain DSM 45986 / CECT 9034 / ACN14a), this protein is Elongation factor Ts.